A 224-amino-acid polypeptide reads, in one-letter code: UPF0111 protein CPn_0681/CP_0066/CPj0681/CpB0708 (224 aa).

This sequence belongs to the UPF0111 family.

The sequence is that of UPF0111 protein CPn_0681/CP_0066/CPj0681/CpB0708 from Chlamydia pneumoniae (Chlamydophila pneumoniae).